Consider the following 419-residue polypeptide: Adenylosuccinate synthetase (419 aa).

Residues 11 to 17 (GDEGKGK) and 39 to 41 (GHS) contribute to the GTP site. Asp-12 functions as the Proton acceptor in the catalytic mechanism. Asp-12 and Gly-39 together coordinate Mg(2+). Residues 12–15 (DEGK), 37–40 (NAGH), Thr-129, Arg-143, Asn-221, Thr-236, and Arg-296 each bind IMP. His-40 (proton donor) is an active-site residue. 292 to 298 (VSTGRKR) is a binding site for substrate. GTP is bound by residues Arg-298, 324–326 (KLD), and 408–410 (GTG).

The protein belongs to the adenylosuccinate synthetase family. As to quaternary structure, homodimer. Mg(2+) serves as cofactor.

It is found in the cytoplasm. It carries out the reaction IMP + L-aspartate + GTP = N(6)-(1,2-dicarboxyethyl)-AMP + GDP + phosphate + 2 H(+). The protein operates within purine metabolism; AMP biosynthesis via de novo pathway; AMP from IMP: step 1/2. Plays an important role in the de novo pathway and in the salvage pathway of purine nucleotide biosynthesis. Catalyzes the first committed step in the biosynthesis of AMP from IMP. The chain is Adenylosuccinate synthetase from Chaetomium globosum (strain ATCC 6205 / CBS 148.51 / DSM 1962 / NBRC 6347 / NRRL 1970) (Soil fungus).